The primary structure comprises 334 residues: 2,3-bisphosphoglycerate-dependent phosphoglycerate mutase 1 (334 aa).

A chloroplast-targeting transit peptide spans 1–48 (MATATSHQSVVSFASLRSSPSSTISQCGFKIDSSLSFTSKKTNFCKIK). Residues 84–91 (RHGESLWN), 97–98 (TG), Arg-134, 188–191 (ERMY), Lys-199, 215–216 (RR), and 259–260 (GN) each bind substrate. His-85 serves as the catalytic Tele-phosphohistidine intermediate. Glu-188 acts as the Proton donor/acceptor in catalysis.

The protein belongs to the phosphoglycerate mutase family. BPG-dependent PGAM subfamily.

Its subcellular location is the plastid. It localises to the chloroplast. It carries out the reaction (2R)-2-phosphoglycerate = (2R)-3-phosphoglycerate. It participates in carbohydrate degradation; glycolysis; pyruvate from D-glyceraldehyde 3-phosphate: step 3/5. In terms of biological role, catalyzes the interconversion of 2-phosphoglycerate and 3-phosphoglycerate. This chain is 2,3-bisphosphoglycerate-dependent phosphoglycerate mutase 1, found in Arabidopsis thaliana (Mouse-ear cress).